The sequence spans 42 residues: Photosystem I reaction center subunit IX (42 aa).

A helical transmembrane segment spans residues 7–27 (YLSVAPVLATLWFGSLAGLLI).

The protein belongs to the PsaJ family.

It is found in the plastid. It localises to the chloroplast thylakoid membrane. Functionally, may help in the organization of the PsaE and PsaF subunits. This chain is Photosystem I reaction center subunit IX, found in Chloranthus spicatus (Chulantree).